Consider the following 324-residue polypeptide: Olfactory receptor 1L3 (324 aa).

The Extracellular segment spans residues 1-25 (MGMSNLTRLSEFILLGLSSRSEDQR). A glycan (N-linked (GlcNAc...) asparagine) is linked at N5. The helical transmembrane segment at 26-49 (PLFALFLIIYLVTLMGNLLIILAI) threads the bilayer. Residues 50–57 (HSDPRLQN) are Cytoplasmic-facing. Residues 58–79 (PMYFFLSILSFADICYTTVIVP) form a helical membrane-spanning segment. Residues 80–100 (KMLVNFLSEKKTISYAECLAQ) lie on the Extracellular side of the membrane. C97 and C189 form a disulfide bridge. The helical transmembrane segment at 101-120 (MYFFLVFGNIDSYLLAAMAI) threads the bilayer. Residues 121–139 (NRCVAICNPFHYVTVMNRR) lie on the Cytoplasmic side of the membrane. Residues 140–158 (CCVLLLAFPITFSYFHSLL) traverse the membrane as a helical segment. Residues 159 to 196 (HVLLVNRLTFCTSNVIHHFFCDVNPVLKLSCSSTFVNE) lie on the Extracellular side of the membrane. A helical membrane pass occupies residues 197-219 (IVAMTEGLASVMAPFVCIIISYL). Residues 220–236 (RILIAVLKIPSAAGKHK) are Cytoplasmic-facing. A helical transmembrane segment spans residues 237–259 (AFSTCSSHLTVVILFYGSISYVY). Residues 260–271 (LQPLSSYTVKDR) are Extracellular-facing. The chain crosses the membrane as a helical span at residues 272–291 (IATINYTVLTSVLNPFIYSL). Residues 292–324 (RNKDMKRGLQKLINKIKSQMSRFSTKTNKICGP) are Cytoplasmic-facing.

Belongs to the G-protein coupled receptor 1 family.

The protein resides in the cell membrane. Odorant receptor. The protein is Olfactory receptor 1L3 (OR1L3) of Homo sapiens (Human).